The sequence spans 1293 residues: Galactose/N-acetyl-D-galactosamine lectin heavy subunit 1 (1293 aa).

A signal peptide spans 1–15 (MKLLLLNILLLCCLA). Residues 16–1234 (DKLNEFSADI…NNVGAIAAAT (1219 aa)) lie on the Extracellular side of the membrane. N-linked (GlcNAc...) asparagine glycosylation is found at asparagine 95, asparagine 198, asparagine 234, asparagine 261, asparagine 337, asparagine 377, asparagine 390, asparagine 468, asparagine 487, asparagine 643, asparagine 659, asparagine 890, asparagine 992, asparagine 1138, asparagine 1204, and asparagine 1214. The chain crosses the membrane as a helical span at residues 1235–1255 (TVAVVVVAVVVALIVVSIGLF). Over 1256–1293 (KTYQLVSSAMKNAITITNENAEYVGADNEATNAATFNG) the chain is Cytoplasmic.

As to quaternary structure, heterodimer composed of a 170 kDa heavy subunit (hgl) and a 31/35 kDa light subunit (lgl); disulfide-linked. Post-translationally, N-glycosylated.

The protein localises to the cell membrane. In terms of biological role, lectin which binds galactose and N-acetyl-D-galactosamine of host glycoproteins and thus mediates adhesion to host cells. Mediates adherence to host colonic mucins, an essential step for pathogenic tissue invasion. This Entamoeba histolytica (strain ATCC 30459 / HM-1:IMSS / ABRM) protein is Galactose/N-acetyl-D-galactosamine lectin heavy subunit 1.